Consider the following 262-residue polypeptide: Alpha-tubulin N-acetyltransferase 1 (262 aa).

Residues 1 to 177 enclose the N-acetyltransferase domain; that stretch reads MQVDADLRPI…TNFVVFEELF (177 aa). 111–124 is a binding site for acetyl-CoA; it reads FYVHFSCQRQGVGQ.

Belongs to the acetyltransferase ATAT1 family. In terms of tissue distribution, expressed solely in touch receptor neurons.

It catalyses the reaction L-lysyl-[alpha-tubulin] + acetyl-CoA = N(6)-acetyl-L-lysyl-[alpha-tubulin] + CoA + H(+). Functionally, specifically acetylates 'Lys-40' in alpha-tubulin/mec-12 on the lumenal side of microtubules. Promotes microtubule destabilization and accelerates microtubule dynamics; this activity may be independent of acetylation activity. Acetylates alpha-tubulin with a slow enzymatic rate, due to a catalytic site that is not optimized for acetyl transfer. Enters the microtubule through each end and diffuses quickly throughout the lumen of microtubules. Acetylates only long/old microtubules because of its slow acetylation rate since it does not have time to act on dynamically unstable microtubules before the enzyme is released. Required for the maintenance of touch receptor neurons and possibly other type of neurons involved in locomotion. Regulates the number and localization of mitochondria in mechanosensory neurons. Plays a role in axonal transport. The protein is Alpha-tubulin N-acetyltransferase 1 of Caenorhabditis elegans.